Reading from the N-terminus, the 182-residue chain is Triplatin (182 aa).

Residues 1–18 (MKMIIAVTFLGIVTIAFA) form the signal peptide. Cystine bridges form between C21–C133, C55–C177, and C88–C105.

This sequence belongs to the calycin superfamily. Triabin family. As to expression, expressed in salivary glands.

Its subcellular location is the secreted. In terms of biological role, inhibits platelet aggregation and vasoconstriction through binding to distinct eicosanoids involved in inflammation (acts as a scavenger), and has a role in inhibiting host innate immunity by impairing platelet-assisted formation of neutrophil extracellular traps (NETs). Inhibits platelet aggregation by collagen, and low doses of thromboxane A2 mimetic (TXA2 mimetic), and arachidonic acid (AA) without affecting aggregation induced by ADP, convulxin (GP6 agonist), and PMA. Binds to TXA2, TXB2, prostaglandine H2 mimetic (PGH2 mimetic), PGJ2, and PGF2alpha. Binding is not observed to leukotrienes, AA, and biogenic amines (PGE1, 5(S)-HETE, 12(S)-HETE, 20-HETE, norepinephrine, epinephrine, serotonin, LTC4 and ADP). Induces relaxation of aorta rat previously contracted with TXA2 mimetic. Moreover, it also impairs platelet-assisted formation of neutrophil extracellular traps (NETs). NETs are web-like structures of DNA and proteins that play an important role in killing of pathogens. In addition, NETs are implicated in thrombus formation. In vivo, this protein exhibits antithrombotic activity in two distinct mice models that are highly dependent on platelets. It is noteworthy that it inhibits thrombosis without promoting excessive bleeding. The protein is Triplatin of Triatoma infestans (Assassin bug).